The chain runs to 147 residues: Deoxyuridine 5'-triphosphate nucleotidohydrolase (147 aa).

A Mg(2+)-binding site is contributed by Arg24. DUTP contacts are provided by residues 68–70, 82–85, Tyr88, Gly93, Ile95, and Arg111; these read PRS and GVID.

The protein belongs to the dUTPase family. It depends on Mg(2+) as a cofactor.

The enzyme catalyses dUTP + H2O = dUMP + diphosphate + H(+). In terms of biological role, this enzyme is involved in nucleotide metabolism: it produces dUMP, the immediate precursor of thymidine nucleotides and it decreases the intracellular concentration of dUTP so that uracil cannot be incorporated into DNA. In Bos taurus (Bovine), this protein is Deoxyuridine 5'-triphosphate nucleotidohydrolase (OPG046).